The chain runs to 1016 residues: S-layer protein A (1016 aa).

An N-terminal signal peptide occupies residues 1-30 (MDLSTKKVISAGLVFIYALSLAMLVPMFLA).

This sequence belongs to the Sulfolobales SlaA family. In terms of assembly, the mushroom-shaped unit cells of the Sulfolobales' S-layers may consist of three SlaB subunits and six SlaA subunits.

The protein resides in the secreted. Its subcellular location is the cell wall. It is found in the S-layer. Its function is as follows. S-layer large protein. May form the highly ordered outer sheath. The polypeptide is S-layer protein A (Acidianus ambivalens (Desulfurolobus ambivalens)).